Reading from the N-terminus, the 416-residue chain is Glutamyl-tRNA reductase (416 aa).

Residues 49-52, serine 105, 110-112, and glutamine 116 contribute to the substrate site; these read TCNR and EPQ. Cysteine 50 (nucleophile) is an active-site residue. NADP(+) is bound at residue 185–190; sequence GAGETI.

It belongs to the glutamyl-tRNA reductase family. Homodimer.

The catalysed reaction is (S)-4-amino-5-oxopentanoate + tRNA(Glu) + NADP(+) = L-glutamyl-tRNA(Glu) + NADPH + H(+). Its pathway is porphyrin-containing compound metabolism; protoporphyrin-IX biosynthesis; 5-aminolevulinate from L-glutamyl-tRNA(Glu): step 1/2. Its function is as follows. Catalyzes the NADPH-dependent reduction of glutamyl-tRNA(Glu) to glutamate 1-semialdehyde (GSA). The sequence is that of Glutamyl-tRNA reductase from Shewanella frigidimarina (strain NCIMB 400).